Consider the following 317-residue polypeptide: UDP-3-O-acylglucosamine N-acyltransferase (317 aa).

Catalysis depends on His229, which acts as the Proton acceptor.

This sequence belongs to the transferase hexapeptide repeat family. LpxD subfamily. As to quaternary structure, homotrimer.

It carries out the reaction a UDP-3-O-[(3R)-3-hydroxyacyl]-alpha-D-glucosamine + a (3R)-hydroxyacyl-[ACP] = a UDP-2-N,3-O-bis[(3R)-3-hydroxyacyl]-alpha-D-glucosamine + holo-[ACP] + H(+). Its pathway is bacterial outer membrane biogenesis; LPS lipid A biosynthesis. In terms of biological role, catalyzes the N-acylation of UDP-3-O-acylglucosamine using 3-hydroxyacyl-ACP as the acyl donor. Is involved in the biosynthesis of lipid A, a phosphorylated glycolipid that anchors the lipopolysaccharide to the outer membrane of the cell. The polypeptide is UDP-3-O-acylglucosamine N-acyltransferase (Campylobacter concisus (strain 13826)).